The following is a 218-amino-acid chain: Protein-L-isoaspartate O-methyltransferase (218 aa).

The active site involves Ser52.

This sequence belongs to the methyltransferase superfamily. L-isoaspartyl/D-aspartyl protein methyltransferase family.

The protein resides in the cytoplasm. It carries out the reaction [protein]-L-isoaspartate + S-adenosyl-L-methionine = [protein]-L-isoaspartate alpha-methyl ester + S-adenosyl-L-homocysteine. In terms of biological role, catalyzes the methyl esterification of L-isoaspartyl residues in peptides and proteins that result from spontaneous decomposition of normal L-aspartyl and L-asparaginyl residues. It plays a role in the repair and/or degradation of damaged proteins. This chain is Protein-L-isoaspartate O-methyltransferase, found in Rhodopseudomonas palustris (strain ATCC BAA-98 / CGA009).